We begin with the raw amino-acid sequence, 234 residues long: Melanoregulin (234 aa).

A disordered region spans residues 215–234 (MNQNISGGEDEDEDESEPDD). The span at 222-234 (GEDEDEDESEPDD) shows a compositional bias: acidic residues.

It belongs to the melanoregulin family.

It localises to the apical cell membrane. The protein localises to the melanosome membrane. The protein resides in the lysosome membrane. It is found in the cytoplasmic vesicle membrane. Its function is as follows. Probably functions as a cargo-recognition protein that couples cytoplasmic vesicles to the transport machinery. Contributes to retrograde melanosome transport from the cell periphery to the center. Overexpression causes accumulation of late endosomes and/or lysosomes at the microtubule organising center (MTOC) at the center of the cell. Probably binds cholesterol and requires the presence of cholesterol in membranes to function in microtubule-mediated retrograde organelle transport. Binds phosphatidylinositol 3-phosphate, phosphatidylinositol 4-phosphate, phosphatidylinositol 5-phosphate and phosphatidylinositol 3,5-bisphosphate. This Danio rerio (Zebrafish) protein is Melanoregulin (mreg).